A 339-amino-acid polypeptide reads, in one-letter code: DNA-directed RNA polymerase subunit alpha (339 aa).

The tract at residues 1–235 (MTIQKNWQEL…DQLNVFVNFE (235 aa)) is alpha N-terminal domain (alpha-NTD). The interval 251 to 339 (FNPAFLKKVD…ELAKRFEDHY (89 aa)) is alpha C-terminal domain (alpha-CTD).

It belongs to the RNA polymerase alpha chain family. Homodimer. The RNAP catalytic core consists of 2 alpha, 1 beta, 1 beta' and 1 omega subunit. When a sigma factor is associated with the core the holoenzyme is formed, which can initiate transcription.

The catalysed reaction is RNA(n) + a ribonucleoside 5'-triphosphate = RNA(n+1) + diphosphate. Its function is as follows. DNA-dependent RNA polymerase catalyzes the transcription of DNA into RNA using the four ribonucleoside triphosphates as substrates. This Rhodopseudomonas palustris (strain BisB5) protein is DNA-directed RNA polymerase subunit alpha.